Here is a 320-residue protein sequence, read N- to C-terminus: MSWIEKILNKSNITSSRKANIPEGVWTKCDSCGQVLYRAELERNLEVCPKCDHHMRISARRRLETFLDTGSTTELGSELEPKDILKFRDSKKYKDRIAAAQKQTHEKDALVVMKGTLKEMPVVAASFEFAFMGGSMASVVGARFVRAVEQALEDNCPLICFSASGGARMQEALMSLMQMAKTSAALAKMQERGLPYISVMTDPTMGGVSASLAMLGDINVAEPKALIGFAGPRVIEQTVREKLPAGFQRSEFLLEKGAIDMIVRRPEMRDELAELLAKLTQYDLAKDEDELLGEEMIADDIESSDNEPEINIETNKKEDV.

The CoA carboxyltransferase N-terminal domain occupies 25–294 (VWTKCDSCGQ…AKDEDELLGE (270 aa)). 4 residues coordinate Zn(2+): Cys29, Cys32, Cys48, and Cys51. A C4-type zinc finger spans residues 29-51 (CDSCGQVLYRAELERNLEVCPKC). Residues 295 to 310 (EMIADDIESSDNEPEI) are compositionally biased toward acidic residues. Residues 295–320 (EMIADDIESSDNEPEINIETNKKEDV) are disordered.

Belongs to the AccD/PCCB family. As to quaternary structure, acetyl-CoA carboxylase is a heterohexamer composed of biotin carboxyl carrier protein (AccB), biotin carboxylase (AccC) and two subunits each of ACCase subunit alpha (AccA) and ACCase subunit beta (AccD). The cofactor is Zn(2+).

It is found in the cytoplasm. The catalysed reaction is N(6)-carboxybiotinyl-L-lysyl-[protein] + acetyl-CoA = N(6)-biotinyl-L-lysyl-[protein] + malonyl-CoA. Its pathway is lipid metabolism; malonyl-CoA biosynthesis; malonyl-CoA from acetyl-CoA: step 1/1. Functionally, component of the acetyl coenzyme A carboxylase (ACC) complex. Biotin carboxylase (BC) catalyzes the carboxylation of biotin on its carrier protein (BCCP) and then the CO(2) group is transferred by the transcarboxylase to acetyl-CoA to form malonyl-CoA. In Proteus mirabilis (strain HI4320), this protein is Acetyl-coenzyme A carboxylase carboxyl transferase subunit beta.